Here is a 3579-residue protein sequence, read N- to C-terminus: Protocadherin-like wing polarity protein stan (3579 aa).

Residues 1 to 29 form the signal peptide; sequence MQTREFPQRPLGLLLVLLVVLLQSSLIKS. The Extracellular segment spans residues 30-2816; it reads YLIIVHEDTP…EPSLLVQITS (2787 aa). 3 N-linked (GlcNAc...) asparagine glycosylation sites follow: Asn-46, Asn-179, and Asn-340. Cadherin domains lie at 360 to 464, 465 to 581, 582 to 689, 690 to 794, 795 to 897, 898 to 1007, 1008 to 1113, and 1114 to 1220; these read EQAL…SPTF, EAEQ…YPQF, SERT…APRF, YTSQ…DPAF, NPKY…APIF, ENAP…APAF, KSPL…PPTF, and ASDK…APVL. Asn-671 is a glycosylation site (N-linked (GlcNAc...) asparagine). Asn-886 is a glycosylation site (N-linked (GlcNAc...) asparagine). N-linked (GlcNAc...) asparagine glycosylation is found at Asn-1269, Asn-1374, and Asn-1441. Residues 1482-1518 enclose the EGF-like 1; calcium-binding domain; that stretch reads EVDLCYSDPCQNGGTCVRREGGYTCVCPSTHTGQNCE. 3 cysteine pairs are disulfide-bonded: Cys-1486-Cys-1497, Cys-1491-Cys-1506, and Cys-1508-Cys-1517. One can recognise a Laminin G-like 1 domain in the interval 1556–1753; that stretch reads LRARAFGRNS…VADNGTLAGC (198 aa). Asn-1650, Asn-1678, and Asn-1747 each carry an N-linked (GlcNAc...) asparagine glycan. 4 disulfide bridges follow: Cys-1727–Cys-1753, Cys-1760–Cys-1771, Cys-1765–Cys-1780, and Cys-1782–Cys-1791. An EGF-like 2; calcium-binding domain is found at 1756-1792; it reads KAPLCQSEPCFNGGTCREGWGTYSCECPEGYAGNSCQ. Residues 1796–1963 form the Laminin G-like 2 domain; the sequence is PAPWRFSGDG…TIRENVEDGC (168 aa). Residue Asn-1843 is glycosylated (N-linked (GlcNAc...) asparagine). 4 cysteine pairs are disulfide-bonded: Cys-1937–Cys-1963, Cys-1969–Cys-1979, Cys-1973–Cys-1988, and Cys-1990–Cys-1999. Positions 1965–2000 constitute an EGF-like 3; calcium-binding domain; sequence SRAQCPDHCPNHSSCQSSWDLSTCECDSGYVGTDCA. The N-linked (GlcNAc...) asparagine glycan is linked to Asn-1975. Asn-2016, Asn-2028, Asn-2071, and Asn-2088 each carry an N-linked (GlcNAc...) asparagine glycan. Cystine bridges form between Cys-2092–Cys-2095, Cys-2097–Cys-2114, Cys-2116–Cys-2125, and Cys-2128–Cys-2140. Residues 2095-2142 form the Laminin EGF-like domain; sequence CDCYSIGSFSGACNPLTGQCECREGVIGRRCDSCSNPYAEVTLSGCEV. Asn-2196 and Asn-2320 each carry an N-linked (GlcNAc...) asparagine glycan. Residues 2553–2562 show a composition bias toward basic and acidic residues; sequence QETQRLEIPS. 3 disordered regions span residues 2553 to 2582, 2610 to 2635, and 2654 to 2684; these read QETQRLEIPSRKIFSSSSPSSSSSSGSTEQ, HEIPPPVSSVEQQEASSDEDGEEREP, and VISPDSPEMLNPNYEGVSSTGSDEQPKGENE. A compositionally biased stretch (low complexity) spans 2567 to 2579; that stretch reads SSSSPSSSSSSGS. The region spanning 2653–2803 is the GAIN-B domain; that stretch reads EVISPDSPEM…AVIVDVIDPE (151 aa). 2 cysteine pairs are disulfide-bonded: Cys-2747-Cys-2785 and Cys-2762-Cys-2787. Positions 2747–2803 are GPS; it reads CVRWNSFTNQWTRLGCQTEIPDFDGDFNPAAQQAILVNCSCTHISSYAVIVDVIDPE. N-linked (GlcNAc...) asparagine glycosylation is present at Asn-2784. The helical transmembrane segment at 2817 to 2837 threads the bilayer; that stretch reads YSAFLVSLPLLLGVLLALALL. Over 2838 to 2845 the chain is Cytoplasmic; that stretch reads RGQQTNSN. The helical transmembrane segment at 2846–2866 threads the bilayer; it reads TIHQNIVLCVFCAELLFFVGM. Over 2867–2883 the chain is Extracellular; it reads QSRRQLLESEFPCKLTA. A helical membrane pass occupies residues 2884-2904; that stretch reads ICLHYFWLAAFAWTTVDCVHL. Residues 2905–2919 lie on the Cytoplasmic side of the membrane; sequence YRMLTEMRDINHGPM. A helical transmembrane segment spans residues 2920–2940; it reads GFYFAMGYGAPAIVVGLSVGV. Over 2941–2959 the chain is Extracellular; sequence RAHEYGNSLFCWLSVYEPV. A helical transmembrane segment spans residues 2960-2980; sequence VWWLVGPIAGMSVVNLLILFV. Topologically, residues 2981–3000 are cytoplasmic; it reads SVKAAFTLKDHVLGFGNLRT. Residues 3001–3021 form a helical membrane-spanning segment; sequence LLWLSVVSLPLMGVMWVLAVL. Residues 3022 to 3031 are Extracellular-facing; the sequence is AASEHSQLLS. Residues 3032–3052 traverse the membrane as a helical segment; that stretch reads LLLSGVVLLHALFCLIGYCII. Topologically, residues 3053–3579 are cytoplasmic; the sequence is NKRVRENLQR…RNIDDDETTV (527 aa). Disordered regions lie at residues 3111 to 3225, 3343 to 3377, 3458 to 3486, and 3499 to 3579; these read GISA…TPAY, LYGRRGEYPDKYGSYKPPSHYGSEKDYPGGGSGSQ, YHQQQQQQQQHHLQDRLSEGSDKNGYHFP, and LSHT…ETTV. Over residues 3113–3128 the composition is skewed to low complexity; the sequence is SASSTTSRSTAKTSSS. Positions 3167-3191 are enriched in basic and acidic residues; it reads RGGEEKPSRRQRKDSDSGSETDGRS. 2 positions are modified to phosphoserine: Ser-3199 and Ser-3200. Positions 3208-3223 are enriched in polar residues; the sequence is ARSSGTHRSTAVSSTP. The span at 3343-3352 shows a compositional bias: basic and acidic residues; that stretch reads LYGRRGEYPD. The segment covering 3459-3468 has biased composition (low complexity); that stretch reads HQQQQQQQQH. The segment covering 3469–3482 has biased composition (basic and acidic residues); that stretch reads HLQDRLSEGSDKNG. A compositionally biased stretch (polar residues) spans 3501–3513; that stretch reads HTQPPSLHGSQLM.

The protein belongs to the G-protein coupled receptor 2 family. As to quaternary structure, interacts with ATP6AP2 (via N-terminus). In terms of tissue distribution, in the pupal wing, expressed at relatively even levels in all regions. Abundant in 6-9 hours embryos. Expressed at higher levels in pupae than larvae.

The protein resides in the cell membrane. It is found in the apical cell membrane. Functionally, involved in the fz signaling pathway that controls wing tissue polarity. Also mediates homophilic cell adhesion. May play a role in initiating prehair morphogenesis. May play a critical role in tissue polarity and in formation of normal dendrite fields. During planar cell polarity, stabilizes asymmetric PCP domains together with ATP6AP2. The chain is Protocadherin-like wing polarity protein stan (stan) from Drosophila melanogaster (Fruit fly).